A 453-amino-acid chain; its full sequence is tRNA modification GTPase MnmE (453 aa).

(6S)-5-formyl-5,6,7,8-tetrahydrofolate is bound by residues Arg-22, Glu-79, and Lys-119. Residues 215–376 (GMKVVIAGRP…LQQHLKSLMG (162 aa)) enclose the TrmE-type G domain. K(+) is bound at residue Asn-225. Residues 225–230 (NAGKSS), 244–250 (TEIAGTT), 269–272 (DTAG), and 334–337 (NKAD) contribute to the GTP site. Ser-229 is a Mg(2+) binding site. Thr-244, Ile-246, and Thr-249 together coordinate K(+). Mg(2+) is bound at residue Thr-250. Lys-453 lines the (6S)-5-formyl-5,6,7,8-tetrahydrofolate pocket.

The protein belongs to the TRAFAC class TrmE-Era-EngA-EngB-Septin-like GTPase superfamily. TrmE GTPase family. In terms of assembly, homodimer. Heterotetramer of two MnmE and two MnmG subunits. K(+) serves as cofactor.

The protein localises to the cytoplasm. Exhibits a very high intrinsic GTPase hydrolysis rate. Involved in the addition of a carboxymethylaminomethyl (cmnm) group at the wobble position (U34) of certain tRNAs, forming tRNA-cmnm(5)s(2)U34. The sequence is that of tRNA modification GTPase MnmE from Shewanella woodyi (strain ATCC 51908 / MS32).